The sequence spans 224 residues: UPF0758 protein VCM66_0205 (224 aa).

Residues 1 to 20 form a disordered region; that stretch reads MSLKQLPTESMPREKLLQRG. The 123-residue stretch at 102–224 folds into the MPN domain; that stretch reads ALTSPQQTKL…VVSFAERGWI (123 aa). Residues H173, H175, and D186 each contribute to the Zn(2+) site. A JAMM motif motif is present at residues 173–186; that stretch reads HNHPSGVAEPSQAD.

This sequence belongs to the UPF0758 family.

This chain is UPF0758 protein VCM66_0205, found in Vibrio cholerae serotype O1 (strain M66-2).